The chain runs to 253 residues: Aspartate/glutamate leucyltransferase (253 aa).

The protein belongs to the R-transferase family. Bpt subfamily.

Its subcellular location is the cytoplasm. The enzyme catalyses N-terminal L-glutamyl-[protein] + L-leucyl-tRNA(Leu) = N-terminal L-leucyl-L-glutamyl-[protein] + tRNA(Leu) + H(+). It catalyses the reaction N-terminal L-aspartyl-[protein] + L-leucyl-tRNA(Leu) = N-terminal L-leucyl-L-aspartyl-[protein] + tRNA(Leu) + H(+). Functionally, functions in the N-end rule pathway of protein degradation where it conjugates Leu from its aminoacyl-tRNA to the N-termini of proteins containing an N-terminal aspartate or glutamate. In Allorhizobium ampelinum (strain ATCC BAA-846 / DSM 112012 / S4) (Agrobacterium vitis (strain S4)), this protein is Aspartate/glutamate leucyltransferase.